Here is a 488-residue protein sequence, read N- to C-terminus: MKYSDLRDFIAQLESRELLKRIDYPVSPHLEMTVVSDKVLRSGGPALLFTNTPNYNMPVLTNLFGTVERVALGMGEESIVALREIGKLLAALKEPDPPKGFKDAFSKLPLLKQALNMAPKYVSGAECQTHVWEKDEVDLTLLPIQTCWPGDVAPLITWGLVTTRGPHQSRENMGIYRQQLLSKNKLIMRWLSHRGGALDYQAWQQEYPQERFPVAVTLGADPATILAAVTPVPDTLSEYAFAGLLRGQRTRLTRCIGNDLHVPASAEIVLEGYLEPGNEAPEGPYGDHTGYYNEVQSFPVFTVERITHRDKPIYHSTYTGRPPDEPAILGVALNEVFIPLLQKQFPEIVDFYLPPEGCSYRLAVVTIKKQYPGHAKRIMMAVWSFLRQFMYTKFVIVCDDDVDARNWQDVIWAMTTRMDPSRDTVMVENTPIDYLDFASPVSGLGSKMGMDATSKWPGETQREWGKPITMDEDVLNRVNSYWSLLGLK.

Asparagine 172 serves as a coordination point for Mn(2+). Residues 175-177, 189-191, and 194-195 each bind prenylated FMN; these read IYR, RWL, and RG. Mn(2+) is bound at residue glutamate 238. Catalysis depends on aspartate 287, which acts as the Proton donor.

It belongs to the UbiD family. Homohexamer. It depends on prenylated FMN as a cofactor. The cofactor is Mn(2+).

It is found in the cell membrane. The catalysed reaction is a 4-hydroxy-3-(all-trans-polyprenyl)benzoate + H(+) = a 2-(all-trans-polyprenyl)phenol + CO2. The protein operates within cofactor biosynthesis; ubiquinone biosynthesis. Catalyzes the decarboxylation of 3-octaprenyl-4-hydroxy benzoate to 2-octaprenylphenol, an intermediate step in ubiquinone biosynthesis. This is 3-octaprenyl-4-hydroxybenzoate carboxy-lyase from Legionella pneumophila (strain Paris).